Reading from the N-terminus, the 524-residue chain is Peptide chain release factor 3 (524 aa).

The tr-type G domain occupies 8-276; sequence NKRRTFAIIS…GFAKYAPAPE (269 aa). Residues 17 to 24, 85 to 89, and 139 to 142 contribute to the GTP site; these read SHPDAGKT, DTPGH, and NKLD.

Belongs to the TRAFAC class translation factor GTPase superfamily. Classic translation factor GTPase family. PrfC subfamily.

It localises to the cytoplasm. Functionally, increases the formation of ribosomal termination complexes and stimulates activities of RF-1 and RF-2. It binds guanine nucleotides and has strong preference for UGA stop codons. It may interact directly with the ribosome. The stimulation of RF-1 and RF-2 is significantly reduced by GTP and GDP, but not by GMP. The polypeptide is Peptide chain release factor 3 (Hydrogenovibrio crunogenus (strain DSM 25203 / XCL-2) (Thiomicrospira crunogena)).